We begin with the raw amino-acid sequence, 475 residues long: Sulfate adenylyltransferase subunit 1 (475 aa).

Residues 25 to 239 (KSLLRFLTCG…EVLETVEIQR (215 aa)) form the tr-type G domain. The segment at 34–41 (GSVDDGKS) is G1. 34–41 (GSVDDGKS) serves as a coordination point for GTP. The G2 stretch occupies residues 92 to 96 (GITID). Positions 113–116 (DTPG) are G3. GTP-binding positions include 113-117 (DTPGH) and 168-171 (NKMD). The tract at residues 168 to 171 (NKMD) is G4. Residues 206 to 208 (SAL) form a G5 region.

The protein belongs to the TRAFAC class translation factor GTPase superfamily. Classic translation factor GTPase family. CysN/NodQ subfamily. In terms of assembly, heterodimer composed of CysD, the smaller subunit, and CysN.

The catalysed reaction is sulfate + ATP + H(+) = adenosine 5'-phosphosulfate + diphosphate. It participates in sulfur metabolism; hydrogen sulfide biosynthesis; sulfite from sulfate: step 1/3. With CysD forms the ATP sulfurylase (ATPS) that catalyzes the adenylation of sulfate producing adenosine 5'-phosphosulfate (APS) and diphosphate, the first enzymatic step in sulfur assimilation pathway. APS synthesis involves the formation of a high-energy phosphoric-sulfuric acid anhydride bond driven by GTP hydrolysis by CysN coupled to ATP hydrolysis by CysD. In Escherichia coli (strain ATCC 8739 / DSM 1576 / NBRC 3972 / NCIMB 8545 / WDCM 00012 / Crooks), this protein is Sulfate adenylyltransferase subunit 1.